The primary structure comprises 495 residues: Lysine--tRNA ligase (495 aa).

The Mg(2+) site is built by Glu-406 and Glu-413.

This sequence belongs to the class-II aminoacyl-tRNA synthetase family. As to quaternary structure, homodimer. The cofactor is Mg(2+).

It localises to the cytoplasm. It catalyses the reaction tRNA(Lys) + L-lysine + ATP = L-lysyl-tRNA(Lys) + AMP + diphosphate. In Staphylococcus epidermidis (strain ATCC 35984 / DSM 28319 / BCRC 17069 / CCUG 31568 / BM 3577 / RP62A), this protein is Lysine--tRNA ligase.